Consider the following 294-residue polypeptide: Ribosomal protein L11 methyltransferase (294 aa).

S-adenosyl-L-methionine contacts are provided by Thr145, Gly167, Asp189, and Asn230.

The protein belongs to the methyltransferase superfamily. PrmA family.

It is found in the cytoplasm. It carries out the reaction L-lysyl-[protein] + 3 S-adenosyl-L-methionine = N(6),N(6),N(6)-trimethyl-L-lysyl-[protein] + 3 S-adenosyl-L-homocysteine + 3 H(+). In terms of biological role, methylates ribosomal protein L11. The protein is Ribosomal protein L11 methyltransferase of Alkalilimnicola ehrlichii (strain ATCC BAA-1101 / DSM 17681 / MLHE-1).